The primary structure comprises 262 residues: Glucosamine-6-phosphate deaminase (262 aa).

The active-site Proton acceptor; for enolization step is Asp-63. Residue Asn-129 is the For ring-opening step of the active site. His-131 serves as the catalytic Proton acceptor; for ring-opening step. The active-site For ring-opening step is Glu-136.

The protein belongs to the glucosamine/galactosamine-6-phosphate isomerase family. NagB subfamily.

It carries out the reaction alpha-D-glucosamine 6-phosphate + H2O = beta-D-fructose 6-phosphate + NH4(+). Its pathway is amino-sugar metabolism; N-acetylneuraminate degradation; D-fructose 6-phosphate from N-acetylneuraminate: step 5/5. Catalyzes the reversible isomerization-deamination of glucosamine 6-phosphate (GlcN6P) to form fructose 6-phosphate (Fru6P) and ammonium ion. This is Glucosamine-6-phosphate deaminase from Bacillus cereus (strain G9842).